The following is a 268-amino-acid chain: Esterase GME11355 (268 aa).

Catalysis depends on charge relay system residues Ser-122, Asp-212, and His-240.

Belongs to the LovG family.

It participates in secondary metabolite biosynthesis. In terms of biological role, esterase; part of the gene cluster that mediates the biosynthesis of dibenzodioxocinones such as pestalotiollide B, a novel class of inhibitors against cholesterol ester transfer protein (CEPT). The biosynthesis initiates from condensation of acetate and malonate units catalyzed by the non-reducing PKS pks8/GME11356. Pks8/GME11356 lacks a thioesterase (TE) domain, which is important to the cyclizing of the third ring of atrochrysone carboxylic acid, and the esterase GME11355 might play the role of TE and catalyzes the cyclization reaction of the C ring. The lactamase-like protein GME11357 (or other beta-lactamases in Pestalotiopsis microspora) probably hydrolyzes the thioester bond between the ACP of pks8/GME11356 and the intermediate to release atrochrysone carboxylic acid, which is spontaneously dehydrates to form endocrocin anthrone. Endocrocin anthrone is further converted to emodin via the endocrocin intermediate. Emodin is then oxidized by several enzymes such as the Baeyer-Villiger oxidase GME11358, the oxidoreductase GME11367, the short chain dehydrogenase/reductase GME11373, as well as by other oxidoreductases from the cluster, to modify the A and C rings and open the B ring, and finally yield monodictyphenone. The prenyltransferase GME11375 may catalyze the addition reaction between the C5 side chains and the carbon bone of dibenzodioxocinones. The remaining biochemical reactions to the final product dibenzodioxocinones should be methylation catalyzed by methyltransferase GME11366 and reduction and lactonization reaction catalyzed by a series of oxidordeuctases. The protein is Esterase GME11355 of Pestalotiopsis microspora.